A 654-amino-acid chain; its full sequence is Smc-like protein Sph3 (654 aa).

Coiled coils occupy residues 135 to 290 (TDAI…LQTV) and 341 to 503 (IRGT…LTAA).

It belongs to the Sph1/Sph2 family.

In terms of biological role, involved in cell-shape determination. Required for the formation of rods and wild-type-like motility. This is Smc-like protein Sph3 from Haloferax volcanii (strain ATCC 29605 / DSM 3757 / JCM 8879 / NBRC 14742 / NCIMB 2012 / VKM B-1768 / DS2) (Halobacterium volcanii).